Consider the following 642-residue polypeptide: Sterol O-acyltransferase 2 (642 aa).

A disordered region spans residues 174 to 194 (KSSPDAVDSVGKNDGAAPTTV). A phosphoserine mark is found at Ser175 and Ser176. 5 helical membrane-spanning segments follow: residues 215–235 (FSGLYVAFWMAIAFGAVKALI), 292–312 (TGWIFTSIYEFLFVIFYMYLT), 404–424 (ISAKSFFWFTMFPTLIYQIEY), 442–462 (IFGTIFLMMIDAQILMYPVAM), and 485–505 (LLVDIVPGFIVMYILDFYLIW). Positions 523 to 529 (FYGDWWN) match the FYXDWWN motif motif. 2 helical membrane-spanning segments follow: residues 567–587 (ATLMTFFLSSVVHELAMYVIF) and 622–642 (VIFWLGICMGPSVMCTLYLTF). His579 is a catalytic residue.

Belongs to the membrane-bound acyltransferase family. Sterol o-acyltransferase subfamily.

It is found in the endoplasmic reticulum membrane. The catalysed reaction is ergosterol + an acyl-CoA = ergosteryl ester + CoA. The enzyme catalyses zymosterol + an acyl-CoA = zymosterol ester + CoA. Functionally, sterol O-acyltransferase that catalyzes the formation of stery esters. This is Sterol O-acyltransferase 2 from Saccharomyces cerevisiae (strain ATCC 204508 / S288c) (Baker's yeast).